The sequence spans 147 residues: Hemoglobin subunit beta (147 aa).

Positions 3–147 (HWTAEEKQLI…VAHALARKYH (145 aa)) constitute a Globin domain. Residues H64 and H93 each coordinate heme b.

Belongs to the globin family. Heterotetramer of 2 alpha (or alpha-D) and 2 beta chains. Red blood cells.

Its function is as follows. Involved in oxygen transport from the lung to the various peripheral tissues. The beta chain is a component of adult hemoglobin A and D. This chain is Hemoglobin subunit beta (HBB), found in Gallus gallus (Chicken).